The primary structure comprises 113 residues: uncharacterized protein (113 aa).

This is an uncharacterized protein from Haemophilus influenzae (strain ATCC 51907 / DSM 11121 / KW20 / Rd).